The following is a 121-amino-acid chain: Large ribosomal subunit protein uL24 (121 aa).

The disordered stretch occupies residues methionine 1 to alanine 30.

This sequence belongs to the universal ribosomal protein uL24 family. In terms of assembly, part of the 50S ribosomal subunit.

In terms of biological role, one of two assembly initiator proteins, it binds directly to the 5'-end of the 23S rRNA, where it nucleates assembly of the 50S subunit. Its function is as follows. Located at the polypeptide exit tunnel on the outside of the subunit. This Methanoculleus marisnigri (strain ATCC 35101 / DSM 1498 / JR1) protein is Large ribosomal subunit protein uL24.